We begin with the raw amino-acid sequence, 394 residues long: Aromatic-amino-acid aminotransferase (394 aa).

Gly-34, Tyr-65, Trp-127, and Asn-180 together coordinate substrate. Lys-243 carries the post-translational modification N6-(pyridoxal phosphate)lysine. Arg-371 is a substrate binding site.

It belongs to the class-I pyridoxal-phosphate-dependent aminotransferase family. As to quaternary structure, homodimer. Pyridoxal 5'-phosphate is required as a cofactor.

It is found in the cytoplasm. It carries out the reaction an aromatic L-alpha-amino acid + 2-oxoglutarate = an aromatic oxo-acid + L-glutamate. Its function is as follows. Shows activities toward both dicarboxylic and aromatic substrates. The chain is Aromatic-amino-acid aminotransferase (tyrB) from Paracoccus denitrificans.